A 188-amino-acid chain; its full sequence is Adenine phosphoribosyltransferase (188 aa).

The protein belongs to the purine/pyrimidine phosphoribosyltransferase family. Homodimer.

It is found in the cytoplasm. The enzyme catalyses AMP + diphosphate = 5-phospho-alpha-D-ribose 1-diphosphate + adenine. It participates in purine metabolism; AMP biosynthesis via salvage pathway; AMP from adenine: step 1/1. Catalyzes a salvage reaction resulting in the formation of AMP, that is energically less costly than de novo synthesis. This chain is Adenine phosphoribosyltransferase, found in Burkholderia multivorans (strain ATCC 17616 / 249).